A 345-amino-acid chain; its full sequence is Phosphoribosylformylglycinamidine cyclo-ligase (345 aa).

Belongs to the AIR synthase family.

The protein localises to the cytoplasm. It catalyses the reaction 2-formamido-N(1)-(5-O-phospho-beta-D-ribosyl)acetamidine + ATP = 5-amino-1-(5-phospho-beta-D-ribosyl)imidazole + ADP + phosphate + H(+). It functions in the pathway purine metabolism; IMP biosynthesis via de novo pathway; 5-amino-1-(5-phospho-D-ribosyl)imidazole from N(2)-formyl-N(1)-(5-phospho-D-ribosyl)glycinamide: step 2/2. This is Phosphoribosylformylglycinamidine cyclo-ligase from Bifidobacterium longum (strain DJO10A).